A 353-amino-acid chain; its full sequence is Photosystem II protein D1 (353 aa).

Threonine 2 is modified (N-acetylthreonine). Threonine 2 carries the phosphothreonine modification. The next 3 membrane-spanning stretches (helical) occupy residues tyrosine 29–serine 46, histidine 118–leucine 133, and tryptophan 142–alanine 156. Histidine 118 provides a ligand contact to chlorophyll a. Tyrosine 126 is a pheophytin a binding site. Positions 170 and 189 each coordinate [CaMn4O5] cluster. A helical membrane pass occupies residues phenylalanine 197–leucine 218. Position 198 (histidine 198) interacts with chlorophyll a. Residues histidine 215 and serine 264 to phenylalanine 265 each bind a quinone. Histidine 215 lines the Fe cation pocket. Histidine 272 provides a ligand contact to Fe cation. A helical transmembrane segment spans residues phenylalanine 274–leucine 288. Histidine 332, glutamate 333, aspartate 342, and alanine 344 together coordinate [CaMn4O5] cluster. Residues alanine 345–glycine 353 constitute a propeptide that is removed on maturation.

Belongs to the reaction center PufL/M/PsbA/D family. PSII is composed of 1 copy each of membrane proteins PsbA, PsbB, PsbC, PsbD, PsbE, PsbF, PsbH, PsbI, PsbJ, PsbK, PsbL, PsbM, PsbT, PsbX, PsbY, PsbZ, Psb30/Ycf12, at least 3 peripheral proteins of the oxygen-evolving complex and a large number of cofactors. It forms dimeric complexes. The D1/D2 heterodimer binds P680, chlorophylls that are the primary electron donor of PSII, and subsequent electron acceptors. It shares a non-heme iron and each subunit binds pheophytin, quinone, additional chlorophylls, carotenoids and lipids. D1 provides most of the ligands for the Mn4-Ca-O5 cluster of the oxygen-evolving complex (OEC). There is also a Cl(-1) ion associated with D1 and D2, which is required for oxygen evolution. The PSII complex binds additional chlorophylls, carotenoids and specific lipids. serves as cofactor. In terms of processing, tyr-161 forms a radical intermediate that is referred to as redox-active TyrZ, YZ or Y-Z. C-terminally processed by CTPA; processing is essential to allow assembly of the oxygen-evolving complex and thus photosynthetic growth.

The protein localises to the plastid. It localises to the chloroplast thylakoid membrane. It carries out the reaction 2 a plastoquinone + 4 hnu + 2 H2O = 2 a plastoquinol + O2. Functionally, photosystem II (PSII) is a light-driven water:plastoquinone oxidoreductase that uses light energy to abstract electrons from H(2)O, generating O(2) and a proton gradient subsequently used for ATP formation. It consists of a core antenna complex that captures photons, and an electron transfer chain that converts photonic excitation into a charge separation. The D1/D2 (PsbA/PsbD) reaction center heterodimer binds P680, the primary electron donor of PSII as well as several subsequent electron acceptors. The polypeptide is Photosystem II protein D1 (Calycanthus floridus var. glaucus (Eastern sweetshrub)).